The chain runs to 222 residues: Translation initiation factor 6 (222 aa).

This sequence belongs to the eIF-6 family.

Functionally, binds to the 50S ribosomal subunit and prevents its association with the 30S ribosomal subunit to form the 70S initiation complex. The polypeptide is Translation initiation factor 6 (Methanothermobacter thermautotrophicus (strain ATCC 29096 / DSM 1053 / JCM 10044 / NBRC 100330 / Delta H) (Methanobacterium thermoautotrophicum)).